The chain runs to 108 residues: Movement protein TGB2 (108 aa).

Topologically, residues 1–8 (MPLTPPPD) are cytoplasmic. The helical transmembrane segment at 9-29 (YTKPFIAVVVGGTLAAFVLLL) threads the bilayer. The Lumenal portion of the chain corresponds to 30–71 (TRNTLPHTGDNLHSLPHGGTYCDGTKRIRYGGPHRSHVPELP). Residues 72–92 (AKSWALITVVAILIALHFSCL) traverse the membrane as a helical segment. The Cytoplasmic portion of the chain corresponds to 93 to 108 (RTHRVHRCVLCHTTSG).

This sequence belongs to the Tymovirales TGBp2 protein family.

The protein resides in the host endoplasmic reticulum membrane. In terms of biological role, plays a role in viral cell-to-cell propagation, by facilitating genome transport to neighboring plant cells through plasmosdesmata,. This chain is Movement protein TGB2, found in Lily virus X.